The following is a 364-amino-acid chain: DNA replication and repair protein RecF (364 aa).

Residue 33–40 participates in ATP binding; sequence GENGSGKT.

This sequence belongs to the RecF family.

Its subcellular location is the cytoplasm. Functionally, the RecF protein is involved in DNA metabolism; it is required for DNA replication and normal SOS inducibility. RecF binds preferentially to single-stranded, linear DNA. It also seems to bind ATP. This Rickettsia felis (strain ATCC VR-1525 / URRWXCal2) (Rickettsia azadi) protein is DNA replication and repair protein RecF.